The sequence spans 127 residues: Fluoride-specific ion channel FluC (127 aa).

Transmembrane regions (helical) follow at residues 4 to 24 (LLLAVFIGGGTGSVARWLLSM), 35 to 55 (LGTLAANLIGAFIIGMGFAWF), 71 to 91 (TGFCGGLTTFSTFSAEVVFLL), and 103 to 123 (VFVNLLGSFAMTALAFWLFSA). Glycine 75 and threonine 78 together coordinate Na(+).

This sequence belongs to the fluoride channel Fluc/FEX (TC 1.A.43) family.

It is found in the cell inner membrane. The enzyme catalyses fluoride(in) = fluoride(out). With respect to regulation, na(+) is not transported, but it plays an essential structural role and its presence is essential for fluoride channel function. Fluoride-specific ion channel. Important for reducing fluoride concentration in the cell, thus reducing its toxicity. The sequence is that of Fluoride-specific ion channel FluC from Escherichia coli O81 (strain ED1a).